Reading from the N-terminus, the 124-residue chain is 14 kDa phosphohistidine phosphatase (124 aa).

A substrate-binding site is contributed by Lys-20. Catalysis depends on His-52, which acts as the Proton acceptor. Substrate is bound at residue 93 to 95 (SMG).

This sequence belongs to the janus family. Monomer.

The protein resides in the cytoplasm. The catalysed reaction is N(pros)-phospho-L-histidyl-[protein] + H2O = L-histidyl-[protein] + phosphate. It carries out the reaction N(tele)-phospho-L-histidyl-[protein] + H2O = L-histidyl-[protein] + phosphate. In terms of biological role, exhibits phosphohistidine phosphatase activity. The protein is 14 kDa phosphohistidine phosphatase (Phpt1) of Mus musculus (Mouse).